Here is a 478-residue protein sequence, read N- to C-terminus: Proton-coupled amino acid transporter 2 (478 aa).

Polar residues-rich tracts occupy residues 1 to 14 (MSVTKSARSPQVAT) and 26 to 37 (KLQSQDPSPANG). The segment at 1 to 46 (MSVTKSARSPQVATPLNLDLPESAKKLQSQDPSPANGSSSESSKKT) is disordered. The Cytoplasmic segment spans residues 1–53 (MSVTKSARSPQVATPLNLDLPESAKKLQSQDPSPANGSSSESSKKTKGITGFQ). The chain crosses the membrane as a helical span at residues 54 to 74 (TLVHLVKGNMGTGILGLPLAV). The Extracellular portion of the chain corresponds to 75–76 (KN). The helical transmembrane segment at 77-97 (AGILMGPLSLLVMGLIACHCM) threads the bilayer. Over 98–143 (HILVRCAQRFCHRLNKPFMDYGDTVMHGLAFSPNAWLQNHAHWGRR) the chain is Cytoplasmic. A helical transmembrane segment spans residues 144 to 164 (VVSFFLIVTQLGFCCVYIVFL). Residues 165–192 (ADNLKQVVEAVNSTTISCHKNETVVLTP) are Extracellular-facing. Residues 193 to 213 (TMDSRLYMLSFLPVLGLLVFV) form a helical membrane-spanning segment. Residues 214 to 217 (RNLR) are Cytoplasmic-facing. A helical transmembrane segment spans residues 218–238 (VLTIFSLLANISMLVSLVIIA). The Extracellular segment spans residues 239–259 (QYIIQEIPDASQLPLVASWKT). The chain crosses the membrane as a helical span at residues 260–280 (YPLFFGTAIFSFESIGVVLPL). Residues 281–292 (ENKMKDARGFPT) are Cytoplasmic-facing. Residues 293-313 (ILSLGMSIITTLYIAIGALGY) traverse the membrane as a helical segment. Over 314–340 (LRFGDDIKASITLNLPNCWLYQSVKLL) the chain is Extracellular. The chain crosses the membrane as a helical span at residues 341–361 (YVVGILCTYALQFYVPAEIII). The Cytoplasmic segment spans residues 362-374 (PLAVSQVSKRWAL). The helical transmembrane segment at 375–395 (PVDLSIRLALVCLTCMLAILI) threads the bilayer. Residues 396-399 (PRLD) are Extracellular-facing. Residues 400-420 (LVLSLVGSVSSSALALIIPPL) traverse the membrane as a helical segment. At 421 to 441 (LEVVTYYGEGISPLTVTKDAL) the chain is on the cytoplasmic side. Residues 442–462 (ISILGFMGFVVGTYQALDELI) form a helical membrane-spanning segment. The Extracellular portion of the chain corresponds to 463-478 (KSGNSPALSNSTMFIQ).

The protein belongs to the amino acid/polyamine transporter 2 family. Expressed in spinal cord, brain, testis, lung, heart, colon, spleen, kidney and muscle. Found in neuronal cell bodies in the anterior horn, in spinal cord brain stem, cerebellum, hippocampus, hypothalamus, rhinencephalon, cerebral cortex, and olfactory bulb in the brain. Also expressed in bone and fat tissues.

Its subcellular location is the cell membrane. The protein resides in the endoplasmic reticulum membrane. It is found in the recycling endosome membrane. The catalysed reaction is glycine(in) + H(+)(in) = glycine(out) + H(+)(out). It carries out the reaction L-alanine(in) + H(+)(in) = L-alanine(out) + H(+)(out). The enzyme catalyses D-alanine(in) + H(+)(in) = D-alanine(out) + H(+)(out). It catalyses the reaction L-proline(out) + H(+)(out) = L-proline(in) + H(+)(in). The catalysed reaction is D-proline(out) + H(+)(out) = D-proline(in) + H(+)(in). It carries out the reaction 4-hydroxy-L-proline(in) + H(+)(in) = 4-hydroxy-L-proline(out) + H(+)(out). The enzyme catalyses L-serine(in) + H(+)(in) = L-serine(out) + H(+)(out). It catalyses the reaction D-serine(out) + H(+)(out) = D-serine(in) + H(+)(in). The catalysed reaction is beta-alanine(in) + H(+)(in) = beta-alanine(out) + H(+)(out). It carries out the reaction 4-aminobutanoate(in) + H(+)(in) = 4-aminobutanoate(out) + H(+)(out). The enzyme catalyses sarcosine(in) + H(+)(in) = sarcosine(out) + H(+)(out). It catalyses the reaction N,N-dimethylglycine(in) + H(+)(in) = N,N-dimethylglycine(out) + H(+)(out). In terms of biological role, electrogenic proton/amino acid symporter with a high selectivity for the small side chains amino acids glycine, alanine and proline, where both L- and D-enantiomers are transported. Extension of the backbone length, as in beta-alanine and 4-aminobutanoate or methylation of the amino group, as in sarcosine and N,N-dimethylglycine, are also tolerated but decrease transport efficiency. A free carboxyl group is preferred. This Mus musculus (Mouse) protein is Proton-coupled amino acid transporter 2.